The primary structure comprises 37 residues: Cortex morphogenetic protein A (37 aa).

In terms of assembly, can form a complex with SpoIVA and ClpX.

The protein localises to the forespore. Ensures proper spore envelope assembly. Represses premature cortex assembly until coat assembly successfully initiates. Also participates in a quality-control pathway that selectively removes defective sporulating cells through regulated cell death. Acts as an adaptator that delivers SpoIVA to the ClpXP proteolytic machinery for degradation, specifically in cells that improperly assemble the spore envelope. This is Cortex morphogenetic protein A from Bacillus subtilis (strain 168).